Consider the following 654-residue polypeptide: Probable Xaa-Pro aminopeptidase P (654 aa).

The Mn(2+) site is built by D449, D460, E558, and E572.

Belongs to the peptidase M24B family. The cofactor is Mn(2+).

It carries out the reaction Release of any N-terminal amino acid, including proline, that is linked to proline, even from a dipeptide or tripeptide.. Catalyzes the removal of a penultimate prolyl residue from the N-termini of peptides. This Aspergillus fumigatus (strain CBS 144.89 / FGSC A1163 / CEA10) (Neosartorya fumigata) protein is Probable Xaa-Pro aminopeptidase P (ampp).